Here is a 1515-residue protein sequence, read N- to C-terminus: Lysophospholipase nte1 (1515 aa).

The Cytoplasmic segment spans residues 1–59 (MESLSNLGNAMSSVLSETTSTTATAILADPTEALSSVVALASDAVSKATSDVVPEHTPT). The chain crosses the membrane as a helical span at residues 60–80 (SWFTIILWLLHRISSVLYFVI). Residues 81-102 (KLTTITTPTFLFNIFSTSLTVT) are Lumenal-facing. The chain crosses the membrane as a helical span at residues 103-123 (MNATTLVLIMLFMMAGVTWVV). The Cytoplasmic segment spans residues 124–1515 (RYRYLNMYSR…RTMAPRRASI (1392 aa)). Disordered regions lie at residues 278–303 (MHDT…GYPM), 519–580 (VTAT…TPRN), and 617–639 (VNPD…SRGG). 2 stretches are compositionally biased toward polar residues: residues 543 to 554 (LTNTQQLKSGPA) and 566 to 579 (PRPQ…STPR). A nucleoside 3',5'-cyclic phosphate is bound by residues 670–789 (SPVP…LAGY) and 835–955 (RLTE…IAAR). Positions 1212–1376 (LVLGGGGARG…IDNLTVSRMK (165 aa)) constitute a PNPLA domain. The GXGXXG signature appears at 1216–1221 (GGGARG). The GXSXG signature appears at 1243–1247 (GTSIG). The active-site Nucleophile is Ser-1245. The active-site Proton acceptor is Asp-1363. Positions 1363 to 1365 (DGG) match the DGA/G motif.

The protein belongs to the NTE family.

It localises to the endoplasmic reticulum membrane. The enzyme catalyses a 1-acyl-sn-glycero-3-phosphocholine + H2O = sn-glycerol 3-phosphocholine + a fatty acid + H(+). Its activity is regulated as follows. Inhibited by organophosphorus esters. Its function is as follows. Intracellular phospholipase B that catalyzes the double deacylation of phosphatidylcholine (PC) to glycerophosphocholine (GroPCho). Plays an important role in membrane lipid homeostasis. Responsible for the rapid PC turnover in response to inositol, elevated temperatures, or when choline is present in the growth medium. The polypeptide is Lysophospholipase nte1 (nte1) (Neurospora crassa (strain ATCC 24698 / 74-OR23-1A / CBS 708.71 / DSM 1257 / FGSC 987)).